The sequence spans 96 residues: Keratin-associated protein 12-3 (96 aa).

Repeat copies occupy residues 10 to 14 (CQPTC), 15 to 19 (CIHSP), 24 to 28 (CYVPV), 30 to 34 (CQSSV), 35 to 39 (CMPVS), 45 to 49 (CVAPS), 50 to 54 (CQPSV), 55 to 59 (CVPVS), 60 to 64 (CRPII), 70 to 74 (CQSSG), 75 to 79 (CCQPP), 80 to 84 (CTTAL), 85 to 89 (CRPIS), and 90 to 94 (CSTPS). The 14 X 5 AA approximate repeats stretch occupies residues 10–94 (CQPTCCIHSP…CRPISCSTPS (85 aa)).

This sequence belongs to the KRTAP type 12 family. As to quaternary structure, interacts with hair keratins. As to expression, restricted to a narrow region of the hair fiber cuticle, lying approximately 20 cell layers above the apex of the dermal papilla of the hair root; not detected in any other tissues.

Functionally, in the hair cortex, hair keratin intermediate filaments are embedded in an interfilamentous matrix, consisting of hair keratin-associated proteins (KRTAP), which are essential for the formation of a rigid and resistant hair shaft through their extensive disulfide bond cross-linking with abundant cysteine residues of hair keratins. The matrix proteins include the high-sulfur and high-glycine-tyrosine keratins. In Homo sapiens (Human), this protein is Keratin-associated protein 12-3 (KRTAP12-3).